A 570-amino-acid polypeptide reads, in one-letter code: Protein NRT1/ PTR FAMILY 8.1 (570 aa).

Thr-98 is subject to Phosphothreonine. 10 helical membrane-spanning segments follow: residues Ile-99–Val-119, Ala-140–Val-160, Phe-182–Val-202, Trp-210–Phe-230, Ile-329–Met-349, Leu-377–Leu-397, Met-414–Val-434, Ile-454–Gly-474, Leu-494–Met-514, and Tyr-537–Ser-557.

It belongs to the major facilitator superfamily. Proton-dependent oligopeptide transporter (POT/PTR) (TC 2.A.17) family. In terms of tissue distribution, expressed in cotyledons, hypocotyls, leaves, roots, flowers, pistils and vascular tissue of sepals, anthers, carpels and funiculi. Not detected in seeds.

It is found in the cell membrane. Peptide transporter. Mediates the transport of di- and tripeptides. High affinity transporter with low selectivity. No transport of amino acids. The polypeptide is Protein NRT1/ PTR FAMILY 8.1 (NPF8.1) (Arabidopsis thaliana (Mouse-ear cress)).